An 826-amino-acid chain; its full sequence is Capsid-associated protein Vp91 (826 aa).

The signal sequence occupies residues 1-18; the sequence is MSDVVLLVLAIIFIIIFV. A C2HC BV-type zinc finger spans residues 147–196; it reads CVPINPCDTRAPGLYAMDEHLLDALVHSQHLDKDYTINAHLQHPTLYLRC. Disulfide bonds link Cys207–Cys220 and Cys260–Cys273. N-linked (GlcNAc...) asparagine; by host glycosylation is present at Asn210. Residues 223 to 281 form the Chitin-binding type-2 domain; it reads NELCQGRPDGYVLDYFPETLLVNEFVECYESKHVVKQCPEQHVFDRQLMTCVQAHPCAF. 6 N-linked (GlcNAc...) asparagine; by host glycosylation sites follow: Asn333, Asn371, Asn413, Asn510, Asn520, and Asn609. The disordered stretch occupies residues 651 to 679; that stretch reads GDGDHWGPDLPPPVQPDSEPDESEPEPEV. Acidic residues predominate over residues 668-677; it reads SEPDESEPEP. N-linked (GlcNAc...) asparagine; by host glycosylation occurs at Asn722.

Its subcellular location is the virion. Probable capsid-associated protein. The polypeptide is Capsid-associated protein Vp91 (Epiphyas postvittana nucleopolyhedrovirus (EppoMNPV)).